The sequence spans 325 residues: Probable transcription factor At4g01260 (325 aa).

The tract at residues 1–98 is disordered; it reads MAPKQLKKIE…SMGEEDVKKK (98 aa). 2 stretches are compositionally biased toward low complexity: residues 23–32 and 49–69; these read ASSGESATSG and KPVV…ESST. Residues 73–83 are compositionally biased toward basic and acidic residues; it reads RSFEKTDEMSK.

It belongs to the GeBP family.

In Arabidopsis thaliana (Mouse-ear cress), this protein is Probable transcription factor At4g01260.